The chain runs to 422 residues: Glutamate-1-semialdehyde 2,1-aminomutase (422 aa).

Residue Lys-258 is modified to N6-(pyridoxal phosphate)lysine.

It belongs to the class-III pyridoxal-phosphate-dependent aminotransferase family. HemL subfamily. Homodimer. Pyridoxal 5'-phosphate is required as a cofactor.

It is found in the cytoplasm. The enzyme catalyses (S)-4-amino-5-oxopentanoate = 5-aminolevulinate. The protein operates within porphyrin-containing compound metabolism; protoporphyrin-IX biosynthesis; 5-aminolevulinate from L-glutamyl-tRNA(Glu): step 2/2. The chain is Glutamate-1-semialdehyde 2,1-aminomutase from Chlamydia trachomatis serovar L2 (strain ATCC VR-902B / DSM 19102 / 434/Bu).